The following is a 507-amino-acid chain: Putative pentatricopeptide repeat-containing protein At3g16710, mitochondrial (507 aa).

Residues 1–48 constitute a mitochondrion transit peptide; that stretch reads MRRSIATGFASIVKGFHLHSHRHRLQISNPRTAASLSLCGFCFWIRAF. PPR repeat units lie at residues 47-81, 82-116, 117-151, 152-186, 187-221, 222-256, 257-291, 292-326, 327-361, 362-396, 397-431, 432-466, and 467-501; these read AFSS…RPLP, SIID…GIPP, LLCT…GFEP, DLVT…GFKP, NVVT…GSRP, NVVT…RIEP, NVIT…SVYP, DVFT…GCYP, NEVI…GVVA, NTIT…RAPP, DIRT…EMDI, NIVT…GMKP, and NVIT…GFLP.

It belongs to the PPR family. P subfamily.

It is found in the mitochondrion. This chain is Putative pentatricopeptide repeat-containing protein At3g16710, mitochondrial, found in Arabidopsis thaliana (Mouse-ear cress).